The primary structure comprises 386 residues: WD repeat-containing protein 89 (386 aa).

6 WD repeats span residues 21 to 65 (KEPT…VIRE), 68 to 106 (GYPGLNGVKFANSHDSVYSSCTDGTVKCWDARLASGKPV), 111 to 155 (GYPS…QDLS), 167 to 207 (THSD…EDDA), 213 to 253 (NSVS…TDEP), and 318 to 357 (GHAATVRSFCWNMQDDSLLTGGEDAQLLLWKPGAVEKTFT).

This is WD repeat-containing protein 89 (WDR89) from Bos taurus (Bovine).